A 209-amino-acid polypeptide reads, in one-letter code: Large ribosomal subunit protein uL3c (209 aa).

The tract at residues 132–154 is disordered; that stretch reads PMSHGSKNHRLPGSIGAGSTPGR.

This sequence belongs to the universal ribosomal protein uL3 family. In terms of assembly, part of the 50S ribosomal subunit.

It localises to the plastid. The protein localises to the cyanelle. In terms of biological role, one of the primary rRNA binding proteins, it binds directly near the 3'-end of the 23S rRNA, where it nucleates assembly of the 50S subunit. The sequence is that of Large ribosomal subunit protein uL3c (rpl3) from Cyanophora paradoxa.